The chain runs to 92 residues: Large ribosomal subunit protein eL43 (92 aa).

The segment at 39–60 (CSFCGKKTVRRGAAGIWSCHSC) adopts a C4-type zinc-finger fold.

The protein belongs to the eukaryotic ribosomal protein eL43 family.

This Candida glabrata (strain ATCC 2001 / BCRC 20586 / JCM 3761 / NBRC 0622 / NRRL Y-65 / CBS 138) (Yeast) protein is Large ribosomal subunit protein eL43 (RPL43).